A 72-amino-acid chain; its full sequence is Translation initiation factor IF-1 (72 aa).

One can recognise an S1-like domain in the interval 1 to 72 (MAKEDTLEFP…SKGRINYRFK (72 aa)).

This sequence belongs to the IF-1 family. Component of the 30S ribosomal translation pre-initiation complex which assembles on the 30S ribosome in the order IF-2 and IF-3, IF-1 and N-formylmethionyl-tRNA(fMet); mRNA recruitment can occur at any time during PIC assembly.

The protein resides in the cytoplasm. Its function is as follows. One of the essential components for the initiation of protein synthesis. Stabilizes the binding of IF-2 and IF-3 on the 30S subunit to which N-formylmethionyl-tRNA(fMet) subsequently binds. Helps modulate mRNA selection, yielding the 30S pre-initiation complex (PIC). Upon addition of the 50S ribosomal subunit IF-1, IF-2 and IF-3 are released leaving the mature 70S translation initiation complex. The protein is Translation initiation factor IF-1 of Cereibacter sphaeroides (strain ATCC 17029 / ATH 2.4.9) (Rhodobacter sphaeroides).